We begin with the raw amino-acid sequence, 199 residues long: Molybdenum cofactor guanylyltransferase (199 aa).

Residues 12 to 14 (LAG), K25, N53, D71, and D101 contribute to the GTP site. D101 contributes to the Mg(2+) binding site.

It belongs to the MobA family. Monomer. Mg(2+) is required as a cofactor.

The protein localises to the cytoplasm. It carries out the reaction Mo-molybdopterin + GTP + H(+) = Mo-molybdopterin guanine dinucleotide + diphosphate. Transfers a GMP moiety from GTP to Mo-molybdopterin (Mo-MPT) cofactor (Moco or molybdenum cofactor) to form Mo-molybdopterin guanine dinucleotide (Mo-MGD) cofactor. The chain is Molybdenum cofactor guanylyltransferase from Cupriavidus pinatubonensis (strain JMP 134 / LMG 1197) (Cupriavidus necator (strain JMP 134)).